A 416-amino-acid chain; its full sequence is Elongation factor 1-gamma 3 (416 aa).

The GST N-terminal domain occupies 1-82 (MALVLHCGSG…YVARLKDNSS (82 aa)). In terms of domain architecture, GST C-terminal spans 87–215 (SLIDYSHIEQ…FKQAESVPPV (129 aa)). Residues 213–263 (PPVQKKAAPPKESKAKEAKKEAPKEAPKPKVEASEEEEAPKPKPKNPLDLL) form a disordered region. Over residues 221–245 (PPKESKAKEAKKEAPKEAPKPKVEA) the composition is skewed to basic and acidic residues. The EF-1-gamma C-terminal domain maps to 256–416 (PKNPLDLLPP…EDLLDAKCFK (161 aa)).

In terms of assembly, EF-1 is composed of four subunits: alpha, beta, delta, and gamma.

Its function is as follows. Probably plays a role in anchoring the complex to other cellular components. The polypeptide is Elongation factor 1-gamma 3 (Oryza sativa subsp. japonica (Rice)).